Here is a 484-residue protein sequence, read N- to C-terminus: Putative tyramine receptor 2 (484 aa).

The Extracellular segment spans residues 1–54 (MVRVELQAASLMNGSSAAEEPQDALVGGDACGGRRPPSVLGVRLAVPEWEVAVT). Asn-13 carries N-linked (GlcNAc...) asparagine glycosylation. A helical transmembrane segment spans residues 55–77 (AVSLSLIILITIVGNVLVVLSVF). Topologically, residues 78-87 (TYKPLRIVQN) are cytoplasmic. A helical transmembrane segment spans residues 88-109 (FFIVSLAVADLTVAVLVMPFNV). Residues 110–126 (AYSLIQRWVFGIVVCKM) lie on the Extracellular side of the membrane. A disulfide bond links Cys-124 and Cys-203. A helical membrane pass occupies residues 127–147 (WLTCDVLCCTASILNLCAIAL). The Cytoplasmic segment spans residues 148–167 (DRYWAITDPINYAQKRTLRR). A helical membrane pass occupies residues 168-190 (VLAMIAGVWLLSGVISSPPLIGW). The Extracellular portion of the chain corresponds to 191–215 (NDWPMEFNDTTPCQLTEEQGYVIYS). Residue Asn-198 is glycosylated (N-linked (GlcNAc...) asparagine). The helical transmembrane segment at 216–237 (SLGSFFIPLFIMTIVYVEIFIA) threads the bilayer. At 238–411 (TKRRLRERAK…LSKERRAART (174 aa)) the chain is on the cytoplasmic side. Over residues 253–280 (SAMKQQMAAQAVPSSVPSHDQESVSSET) the composition is skewed to polar residues. Disordered stretches follow at residues 253-322 (SAMK…PAMV) and 350-383 (TTTT…PTPV). The segment covering 295-306 (EKRRKTKKKSKK) has biased composition (basic residues). Residues 350-360 (TTTTTTTTTTT) are compositionally biased toward low complexity. A compositionally biased stretch (polar residues) spans 361 to 378 (AVTDSPRSRTASQKGSTA). A helical membrane pass occupies residues 412–433 (LGIIMGVFVVCWLPFFLMYVIV). Over 434-448 (PFCNPSCKPSPKLVN) the chain is Extracellular. A helical membrane pass occupies residues 449–470 (FITWLGYINSALNPIIYTIFNL). Residues 471–484 (DFRRAFKKLLHFKT) are Cytoplasmic-facing.

This sequence belongs to the G-protein coupled receptor 1 family.

The protein localises to the cell membrane. G-protein coupled receptor for tyramine, a known neurotransmitter and neuromodulator and direct precursor of octopamine. This is Putative tyramine receptor 2 (GCR2) from Locusta migratoria (Migratory locust).